The sequence spans 218 residues: Deoxyribose-phosphate aldolase (218 aa).

The Proton donor/acceptor role is filled by Asp-92. The Schiff-base intermediate with acetaldehyde role is filled by Lys-156. Lys-185 (proton donor/acceptor) is an active-site residue.

This sequence belongs to the DeoC/FbaB aldolase family. DeoC type 1 subfamily.

The protein resides in the cytoplasm. It carries out the reaction 2-deoxy-D-ribose 5-phosphate = D-glyceraldehyde 3-phosphate + acetaldehyde. Its pathway is carbohydrate degradation; 2-deoxy-D-ribose 1-phosphate degradation; D-glyceraldehyde 3-phosphate and acetaldehyde from 2-deoxy-alpha-D-ribose 1-phosphate: step 2/2. Functionally, catalyzes a reversible aldol reaction between acetaldehyde and D-glyceraldehyde 3-phosphate to generate 2-deoxy-D-ribose 5-phosphate. This Desulfitobacterium hafniense (strain DSM 10664 / DCB-2) protein is Deoxyribose-phosphate aldolase.